Consider the following 5495-residue polypeptide: Microtubule-associated protein futsch (5495 aa).

Disordered stretches follow at residues 1 to 97, 656 to 975, 988 to 1074, 1086 to 1111, 1128 to 1167, 1185 to 1204, 1255 to 1275, 1306 to 1358, 1402 to 1840, 1866 to 2631, 2709 to 2810, 2830 to 4166, 4196 to 4230, 4362 to 4612, 4636 to 4668, 4687 to 4975, 5035 to 5065, 5101 to 5138, 5170 to 5199, and 5328 to 5350; these read MGDQ…DADG, AKAD…LKEE, RDEM…AEEE, ERKA…EQSK, KSRT…IGAP, SATI…DERI, KDAP…SGER, HEEA…EPNK, NQED…VVES, EIGK…PGFV, AKTV…KDFA, LPTL…DLSL, KAES…EASP, IIPD…ASQL, AQKS…DDSL, AFST…QMLA, KTVT…ERDQ, SYEL…EEHS, PSTE…QTWA, and GLPS…PKKE. Over residues 35 to 48 the composition is skewed to low complexity; it reads AKGAGDGPAQDAAQ. Basic and acidic residues-rich tracts occupy residues 656-672, 696-716, and 758-795; these read AKAD…HEAD, EPEH…KKVE, and GKAD…EKKS. Composition is skewed to low complexity over residues 797–806 and 819–831; these read PTTTPAARAP and PATK…TPAK. The span at 832–843 shows a compositional bias: basic and acidic residues; the sequence is SAKEANNRKVLE. Residues 850 to 888 are compositionally biased toward low complexity; it reads RVQATSTVSRRVTSTASERRVQQQAEAKTAATGATQATQ. The segment covering 918 to 931 has biased composition (basic and acidic residues); it reads KAADLKKTRLDKGG. The segment covering 932-942 has biased composition (polar residues); sequence TTDSSLVSTPS. 2 stretches are compositionally biased toward basic and acidic residues: residues 962 to 975 and 988 to 1007; these read DAEK…LKEE and RDEM…REMP. Over residues 1012 to 1041 the composition is skewed to acidic residues; sequence GDGENEPDEEEEYLIIEKEEVEQYTEDSIV. Residues 1047-1065 are compositionally biased toward basic and acidic residues; that stretch reads MTKEEEIQKHQRDSQESEK. 2 stretches are compositionally biased toward basic and acidic residues: residues 1128 to 1140 and 1148 to 1163; these read KSRT…KPAE and PEEK…KDDQ. Residues 1187-1196 are compositionally biased toward polar residues; the sequence is TIESGATTAP. Basic and acidic residues-rich tracts occupy residues 1306–1319, 1327–1337, 1343–1358, and 1408–1443; these read HEEA…KDSQ, SHKEESAKEEK, KENK…EPNK, and EQVK…KETS. Repeat copies occupy residues 1469 to 1502 and 1513 to 1539. Positions 1469–4032 are 53 X approximate repeat; the sequence is REDTGSIESP…SPLASKESSR (2564 aa). Basic and acidic residues-rich tracts occupy residues 1546-1555, 1571-1663, 1679-1696, 1718-1732, and 1748-1779; these read PESEAKDKKS, SVKD…DEKS, SVKD…RESI, and GIKD…RRDS. Repeat copies occupy residues 1622–1649, 1660–1686, 1690–1718, 1755–1782, 1790–1818, 1837–1865, 1874–1902, 1911–1939, 1948–1976, 1985–2013, 2022–2050, 2059–2087, 2096–2124, 2133–2161, 2170–2198, 2215–2243, and 2262–2292. The span at 1804–1815 shows a compositional bias: polar residues; it reads ERSQPESVTASR. Basic and acidic residues-rich tracts occupy residues 1887-1896, 1904-1942, 1960-1976, 1994-2007, 2041-2059, 2078-2096, 2115-2133, 2152-2170, 2189-2207, 2226-2244, 2263-2281, 2300-2318, 2337-2355, 2374-2391, 2419-2435, 2466-2482, 2560-2588, and 2604-2627; these read VKPESRRESS, HAED…ESDK, MKDE…ESVK, SAKD…ELSR, SVKD…ESVA, SIKD…ESVA, SIKD…ESAA, SVKD…RESM, SVKD…RRES, SVKD…ESKT, IKYD…EDKS, and SDHE…DKSR. The stretch at 2355–2391 is repeat 20; that stretch reads AEKSPLPSKEASRPASVAESVKDEADKSKEESRRESM. Tandem repeats lie at residues 2703–2726 and 2761–2787. Residues 2764-2780 show a composition bias toward basic and acidic residues; it reads ESKDDAAQLKSSVEDLR. Serine 2800 is subject to Phosphoserine; by GSK3-beta. Tandem repeats lie at residues 2820–2846, 2864–2892, and 2907–2933. Positions 2845 to 2861 are enriched in low complexity; it reads PQTSTPTSSPTVASVQP. Basic and acidic residues-rich tracts occupy residues 2889 to 2914 and 2942 to 2954; these read AEER…KDAS and GPKD…KESS. Polar residues predominate over residues 2955–2966; that stretch reads RPPSVSASITGD. 28 consecutive repeat copies span residues 2956-2987, 3006-3034, 3049-3075, 3089-3117, 3131-3158, 3200-3224, 3228-3256, 3265-3293, 3302-3330, 3339-3367, 3376-3404, 3413-3441, 3450-3478, 3487-3515, 3524-3552, 3561-3589, 3598-3626, 3635-3663, 3672-3700, 3709-3737, 3746-3774, 3783-3811, 3820-3848, 3867-3894, 3895-3921, 3931-3958, 3968-3995, and 4005-4032. Composition is skewed to basic and acidic residues over residues 2980 to 2996, 3017 to 3051, 3061 to 3075, 3087 to 3116, 3156 to 3168, 3175 to 3208, and 3226 to 3248; these read SVKD…ESIA, SQKD…ESRP, VPRE…KDTS, EDEK…KSQE, PMDK…EPSR, SIKH…KGEK, and IKDE…ESSK. Phosphoserine is present on residues serine 3067, serine 3071, and serine 3075. A compositionally biased stretch (basic and acidic residues) spans 3300-3310; it reads SRPESEAESLK. The span at 3316-3327 shows a compositional bias: polar residues; the sequence is SQETSRPESVTE. 14 stretches are compositionally biased toward basic and acidic residues: residues 3350–3363, 3373–3399, 3419–3431, 3448–3465, 3484–3502, 3521–3539, 3558–3576, 3599–3613, 3632–3650, 3669–3687, 3710–3724, 3743–3761, 3780–3798, and 3817–3835; these read NAKD…EQRP, SIKD…RESV, SVKD…KEES, VKDE…ESVA, SVKD…ESGA, SIKD…ESVA, SVKD…DSVA, EAEK…ESVA, and SVKD…ESVA. Low complexity predominate over residues 3836–3850; that stretch reads EKSSLASKKASRPAS. Composition is skewed to basic and acidic residues over residues 3854-3872, 3891-3909, 3928-3946, 3965-3983, 4002-4020, 4039-4066, 4086-4095, and 4115-4141; these read SVKD…ESVA, SVKD…ESGA, SVKD…ESVT, SIKD…ESIK, SVKDETEKPE, and AKDE…KEAS. 2 stretches are compositionally biased toward polar residues: residues 4142–4152 and 4214–4223; these read RSLSVAETASS and QPDTGHTAST. Basic and acidic residues-rich tracts occupy residues 4362–4379, 4386–4410, and 4419–4432; these read IIPD…KSTA, DKST…KSSP, and IEEK…EKAQ. The segment covering 4443–4461 has biased composition (low complexity); the sequence is PESVASQPESVPSPSQSAA. The segment covering 4462 to 4481 has biased composition (basic and acidic residues); that stretch reads SHEHKEVELSESHKAEKSSR. The segment covering 4498–4508 has biased composition (polar residues); the sequence is RPASSTSQFST. The segment covering 4517–4528 has biased composition (low complexity); the sequence is ESLLHSLTTTET. Residues 4529–4539 are compositionally biased toward basic and acidic residues; the sequence is VETKQMEEKSS. A compositionally biased stretch (low complexity) spans 4540-4560; it reads FESVSTSVTKSTVLSSQSTVQ. Basic and acidic residues-rich tracts occupy residues 4575–4584 and 4639–4650; these read KVEDSSRRES and SNKEIKDARETK. Low complexity-rich tracts occupy residues 4651-4662 and 4703-4714; these read VTSQFTTTTSSA and TTASAVSSTSAS. Residues 4744–4754 are compositionally biased toward acidic residues; the sequence is PEDEEPADDVD. Basic and acidic residues-rich tracts occupy residues 4755–4764 and 4788–4798; these read ERSSVKESRS and LVEEEHEHVEE. Residues 4804–4829 are compositionally biased toward low complexity; that stretch reads TSTSKTTTLLQSSEQSSTTTSSTSKT. The segment covering 4835–4851 has biased composition (polar residues); the sequence is ESITLTQMDQQTSQSQG. Over residues 4875–4905 the composition is skewed to low complexity; sequence GSAGSVIGAGAGAVAAGGKCESSAASIVSSS. The segment covering 4915-4930 has biased composition (polar residues); that stretch reads GKSSPGALTSESQSIP. At serine 4950 the chain carries Phosphoserine; by GSK3-beta. A compositionally biased stretch (basic and acidic residues) spans 4955–4970; that stretch reads VSKDELKSLEMQHHSQ. Residues 5101-5112 show a composition bias toward polar residues; it reads SYELQHSSSGVS. The span at 5185–5196 shows a compositional bias: low complexity; that stretch reads SQSSESVESSSQ.

Heterodimer of a heavy and a light chain. Interacts with Fmr1. Found in a complex with tubulin and Futsch. Post-translationally, several minor light chains can be created with markedly different pIs. In terms of processing, phosphorylated by SGG/GSK3. Phosphorylated by LRRK2 at the presynapse of neuromuscular junctions, which negatively regulates the activity controlling synaptic differentiation. As to expression, neuronal cells within the PNS and CNS.

The protein resides in the cytoplasm. The protein localises to the cytoskeleton. During embryogenesis, necessary for dendritic and axonal organization and growth at the neuromuscular junction through the regulation of the synaptic microtubule cytoskeleton. Microtubule hairpin loops are found within a small subset of synaptic boutons at the neuromuscular synapse, these loops are stabilized by futsch. Loop morphology and dynamics suggest that rearrangement of these microtubule-based loops is a critical component of the process of bouton division and for subsequent nerve-terminal growth and branching. Translation is repressed by Fmr1. Together with ringer, required for neuromuscular junction (NMJ) bouton growth by regulating synaptic microtubules. Function with ringer in maintaining microtubule stability and dynamics, is essential for promoting axon regeneration in response to peripheral (PNS) and central nervous system (CNS) injury. In response to axotomy, acts downstream of a stress response cascade involving Xbp1 splicing, to control axon regeneration. This chain is Microtubule-associated protein futsch (futsch), found in Drosophila melanogaster (Fruit fly).